Reading from the N-terminus, the 120-residue chain is Holo-[acyl-carrier-protein] synthase (120 aa).

Mg(2+) contacts are provided by D8 and E58.

It belongs to the P-Pant transferase superfamily. AcpS family. Mg(2+) is required as a cofactor.

The protein localises to the cytoplasm. The enzyme catalyses apo-[ACP] + CoA = holo-[ACP] + adenosine 3',5'-bisphosphate + H(+). Its function is as follows. Transfers the 4'-phosphopantetheine moiety from coenzyme A to a Ser of acyl-carrier-protein. In Streptococcus sanguinis (strain SK36), this protein is Holo-[acyl-carrier-protein] synthase.